The chain runs to 84 residues: RNA-binding protein Hfq (84 aa).

The 61-residue stretch at 11–71 (DVFLNFIRKN…ISTVMPSTPI (61 aa)) folds into the Sm domain.

This sequence belongs to the Hfq family. As to quaternary structure, homohexamer.

Its function is as follows. RNA chaperone that binds small regulatory RNA (sRNAs) and mRNAs to facilitate mRNA translational regulation in response to envelope stress, environmental stress and changes in metabolite concentrations. Also binds with high specificity to tRNAs. In Paramagnetospirillum magneticum (strain ATCC 700264 / AMB-1) (Magnetospirillum magneticum), this protein is RNA-binding protein Hfq.